We begin with the raw amino-acid sequence, 223 residues long: MQLKPMEINPEMLNKVLARLGVAGQWRFVDVLGLEEETLGSVPAPACALLLLFPLTAQHENFRKKQIEELKGQEVSPKVYFMKQTIGNSCGTIGLIHAVANNQDKLEFEDGSVLKQFLSETEKLSPEDRAKCFEKNEAIQAAHDAVAQEGQCRVDDKVNFHFILFNNVDGHLYELDGRMPFPVNHGASSEDLLLQDAAKVCREFTEREQGEVRFSAVALCKAA.

Residue methionine 1 is modified to N-acetylmethionine. A UCH catalytic domain is found at 2–221; that stretch reads QLKPMEINPE…VRFSAVALCK (220 aa). An interaction with ubiquitin region spans residues 5–10; it reads PMEINP. The active-site Nucleophile is the cysteine 90. Serine 125 carries the phosphoserine modification. Histidine 161 functions as the Proton donor in the catalytic mechanism. The tract at residues 211-216 is interaction with ubiquitin; sequence EVRFSA. Residue cysteine 220 is the site of S-farnesyl cysteine attachment. A propeptide spans 221 to 223 (removed in mature form); that stretch reads KAA.

This sequence belongs to the peptidase C12 family. Monomer. Homodimer. Interacts with COPS5 and SNCA. Post-translationally, O-glycosylated.

It is found in the cytoplasm. Its subcellular location is the endoplasmic reticulum membrane. It catalyses the reaction Thiol-dependent hydrolysis of ester, thioester, amide, peptide and isopeptide bonds formed by the C-terminal Gly of ubiquitin (a 76-residue protein attached to proteins as an intracellular targeting signal).. Ubiquitin-protein hydrolase involved both in the processing of ubiquitin precursors and of ubiquitinated proteins. This enzyme is a thiol protease that recognizes and hydrolyzes a peptide bond at the C-terminal glycine of ubiquitin. Also binds to free monoubiquitin and may prevent its degradation in lysosomes. The homodimer may have ATP-independent ubiquitin ligase activity. This Equus caballus (Horse) protein is Ubiquitin carboxyl-terminal hydrolase isozyme L1 (UCHL1).